Here is a 689-residue protein sequence, read N- to C-terminus: Transmembrane protein 214 (689 aa).

Disordered regions lie at residues 1–37 (MATKTAGVGRWEVVKKGRRPGVGAGAGGRGGGRNRRA) and 70–107 (RQNKEQVPPPAVEPKKPGNKKQPKKVATPPNQNQKQGR). Ala2 bears the N-acetylalanine mark. Over residues 20 to 31 (PGVGAGAGGRGG) the composition is skewed to gly residues. N-linked (GlcNAc...) asparagine glycosylation is found at Asn269 and Asn307. 2 consecutive transmembrane segments (helical) span residues 480 to 500 (LPWTRLLLLLLVFAVGFLCHD) and 616 to 636 (LPLLFHQNVLLPLWHLLLEAL).

This sequence belongs to the TMEM214 family. As to quaternary structure, constitutively interacts with CASP4; required for the localization of procaspase 4 to the ER.

The protein resides in the endoplasmic reticulum membrane. Its function is as follows. Critical mediator, in cooperation with CASP4, of endoplasmic reticulum-stress induced apoptosis. Required or the activation of CASP4 following endoplasmic reticulum stress. This Homo sapiens (Human) protein is Transmembrane protein 214 (TMEM214).